Reading from the N-terminus, the 739-residue chain is Nucleoprotein (739 aa).

Positions 334 to 363 form a coiled coil; that stretch reads VNVGEQYQQLREAATEAEKQLQQYAESREL. 2 disordered regions span residues 414–475 and 493–641; these read RPNL…YHDD and DDNK…DIGQ. Residues 531 to 546 show a composition bias toward polar residues; sequence SDNNQQSADSEEQGGQ. The segment covering 570–579 has biased composition (acidic residues); the sequence is TLMDQGDDDP. Positions 614-624 are enriched in basic and acidic residues; sequence AEAHEPPHKSS. The span at 625–634 shows a compositional bias: polar residues; that stretch reads NEPAETSQLN.

The protein belongs to the filoviruses nucleoprotein family. As to quaternary structure, homooligomer. Homomultimerizes to form the nucleocapsid. Binds to viral genomic RNA. Interacts with VP35 and VP30 to form the nucleocapsid. Interacts with host PPP2R5C; this interaction leads to VP30 dephosphorylation and viral transcription. Interacts with VP24; this interaction facilitates nucleocapsid assembly and genome packaging. Interacts with matrix protein VP40; this interaction allows recruitment of the nucleocapsid into progeny virions. Interacts with host STAU1. Interacts with host NXF1 (via RNA-binding domain); this interaction recruits NXF1 to the inclusion bodies were viral replication takes place, probably to export viral mRNA-NXF1 complexes from these sites. Interacts with host CCDC92; this interaction sequesters NP in the host cytoplasm. Interacts with host TRIM14. Post-translationally, phosphorylated and O-glycosylated by host. Acetylated by host EP300 in vitro.

It is found in the virion. The protein resides in the host cytoplasm. In terms of biological role, oligomerizes into helical capsid to encapsidate the viral genome, protecting it from nucleases and the cellular innate immune response. VP35 binds to and stabilizes monomeric NP, keeping it soluble. Upon virus replication, NP is recruited to bind cooperatively viral genomic RNA and VP35 is released. The encapsidated genomic RNA is termed the nucleocapsid and serves as template for transcription and replication. The nucleocapsid is helical with a pitch of 10.81 NP per turn and a diameter of about 22nm. Each NP binds to six nucleotides of viral genomic RNA, three being exposed to the solvant and three hidden into the nucleocapsid. Also recruits host PPP2R5C phosphatase to dephosphorylate VP30 and thereby promote viral transcription. Upon virion assembly and budding, NP binds to VP24 and possibly host STAU1. The polypeptide is Nucleoprotein (NP) (Reston ebolavirus (strain Reston-89) (REBOV)).